The following is a 376-amino-acid chain: MDTSENAASAAEQQPTQQIDQLTVPNAPDGGSSAPAPSTSPNSISPSNPTGTPAPGASAQTPNPNAAGASASGSANYKLMCTLEGHTKSISSAKFSPCGKYLGTSSADKTVKIWNMDHMICERTLTGHKLGVNDIAWSSDSRCVVSASDDKTLKIFEIVTSRMTKTLKGHNNYVFCCNFNPQSSLVVSGSFDESVRIWDVKTGMCIKTLPAHSDPVSAVSFNRDGSLIASGSYDGLVRIWDTANGQCIKTLVDDENPPVAFVKFSPNGKYILASNLDSTLKLWDFSKGKTLKQYTGHENSKYCIFANFSVTGGKWIISGSEDCKIYIWNLQTREIVQCLEGHTQPVLASDCHPVQNIIASGALEPDNKIHIWRSDV.

The segment covering 1-24 (MDTSENAASAAEQQPTQQIDQLTV) has biased composition (polar residues). Residues 1-70 (MDTSENAASA…TPNPNAAGAS (70 aa)) form a disordered region. Positions 25–53 (PNAPDGGSSAPAPSTSPNSISPSNPTGTP) are enriched in low complexity. 7 WD repeats span residues 85 to 115 (GHTK…KIWN), 127 to 157 (GHKL…KIFE), 169 to 199 (GHNN…RIWD), 211 to 241 (AHSD…RIWD), 254 to 284 (DENP…KLWD), 296 to 329 (GHEN…YIWN), and 341 to 373 (GHTQ…HIWR).

The protein belongs to the WD repeat WDR5/wds family. Component of the SET2 complex (also known as the SET1/COMPASS complex), which contains at least set-2, swd-2.1, cfp-1, rbbp-5, wdr-5.1, dpy-30 and ash-2. Within the complex, interacts with cfp-1, ash-2, dpy-30 and hda-1. Interacts with histone H3 both unmethylated and methylated at 'Lys-4'. Interacts with jmjd-3.1, ceh-6, sox-2, sem-4 and egl-27. Interacts with set-2. Enriched in the germline. Detected in all nuclei of the embryo. In larvae, expression is detected in the nuclei of seam cells, somatic gonad precursor cells Z1 and Z4, vulval precursor cells, distal tip cells, hypodermal cells, intestinal and muscle cells. Also detected in the neurons from the ventral nerve cord, head and tail region. Expressed in the head and tail region, intestinal cells, muscle cells, cells of the vulva, spermatheca and sheath cells in adults.

It localises to the nucleus. Contributes to histone modification. May position the N-terminus of histone H3 for efficient trimethylation at 'Lys-4'. Required for di- and trimethylation, particularly for the trimethylation at 'Lys-4' of histone H3. Not required for demethylation of histone H3 'Lys-27'. H3 'Lys-4' methylation represents a specific tag for epigenetic transcriptional activation, germline establishment, maintenance and function. Implicated in the epigenetic inheritance of lifespan over several generations. Acts in the germline to limit the longevity of the soma, probably by regulating a lipid metabolism pathway that signals from the germline to the intestine, thereby preventing accumulation of mono-unsaturated fatty acids. Required for RNA interference with probable antagonistic role against hpl-2 function. Plays a role in vulval cell fate specification by acting in the synthetic multivulva pathway independent of set-2. Sex determining protein required in the germline to promote the spermatogenesis to oogenesis switch during the late larval stages of development. Acts with the sex determining factor tra-1, and redundantly with wdr-5.2, to regulate fog-3 expression, which in turn determines germ cell fate. Cooperates with jmjd-3.1, egl-27 and unc-3 to ensure robust transdifferentiation of the Y rectal cell to the PDA motor neuron during larval development. The chain is WD repeat-containing protein wdr-5.1 (wdr-5.1) from Caenorhabditis elegans.